The following is an 88-amino-acid chain: Phosphocarrier protein HPr (88 aa).

Residues 1–88 (MASKEFHIVA…ETMTKEGLAE (88 aa)) enclose the HPr domain. His-15 serves as the catalytic Pros-phosphohistidine intermediate. Residue Ser-46 is modified to Phosphoserine; by HPrK/P.

It belongs to the HPr family.

The protein resides in the cytoplasm. With respect to regulation, phosphorylation on Ser-46 inhibits the phosphoryl transfer from enzyme I to HPr. Its function is as follows. General (non sugar-specific) component of the phosphoenolpyruvate-dependent sugar phosphotransferase system (sugar PTS). This major carbohydrate active-transport system catalyzes the phosphorylation of incoming sugar substrates concomitantly with their translocation across the cell membrane. The phosphoryl group from phosphoenolpyruvate (PEP) is transferred to the phosphoryl carrier protein HPr by enzyme I. Phospho-HPr then transfers it to the PTS EIIA domain. Functionally, P-Ser-HPr interacts with the catabolite control protein A (CcpA), forming a complex that binds to DNA at the catabolite response elements cre, operator sites preceding a large number of catabolite-regulated genes. Thus, P-Ser-HPr is a corepressor in carbon catabolite repression (CCR), a mechanism that allows bacteria to coordinate and optimize the utilization of available carbon sources. P-Ser-HPr also plays a role in inducer exclusion, in which it probably interacts with several non-PTS permeases and inhibits their transport activity. This Lactococcus lactis subsp. cremoris (Streptococcus cremoris) protein is Phosphocarrier protein HPr (ptsH).